The following is a 601-amino-acid chain: HIRA-interacting protein 3 (601 aa).

2 disordered regions span residues 60-469 (KMQA…EDHP) and 546-601 (STGR…GDSS). The segment covering 66–76 (GTREGKPDFIK) has biased composition (basic and acidic residues). Phosphoserine is present on residues Ser85, Ser96, and Ser98. The span at 97–113 (ESESSSSPSSPDGSGPS) shows a compositional bias: low complexity. Positions 117-129 (RTTKKTCLRRALK) are enriched in basic residues. Residues 130–149 (KAVESTDEDHQTDLDAKMGL) show a composition bias toward basic and acidic residues. At Ser134 the chain carries Phosphoserine. Phosphothreonine occurs at positions 135 and 141. 3 positions are modified to phosphoserine: Ser152, Ser153, and Ser163. Residue Thr167 is modified to Phosphothreonine. Basic and acidic residues predominate over residues 186–205 (GAKDKQVPLKADRKQVREES). Phosphoserine occurs at positions 205, 207, 208, 231, 234, 238, 313, 359, 360, 384, and 389. Basic and acidic residues-rich tracts occupy residues 238-264 (SPAK…ERKS) and 313-324 (SSEKGEAEKEEG). Positions 347–378 (RTQTESGRRQNTSSRDDSNSTQEQAAAQGTTK) are enriched in polar residues. Positions 379-388 (SGSLGSSNGD) are enriched in low complexity. A Phosphothreonine modification is found at Thr391. Residues Ser396 and Ser398 each carry the phosphoserine modification. Residues 413-432 (SNKSSKNGQARSCSSSSDSS) show a composition bias toward low complexity. Residues 429–572 (SDSSPEPTGQ…TSPGETYRRT (144 aa)) form an interaction with the histone H2A-H2B complex region. A compositionally biased stretch (polar residues) spans 556 to 566 (WNPSGEGTSPG). Phosphoserine is present on residues Ser564, Ser575, Ser595, Ser596, and Ser600. Over residues 568–580 (TYRRTLDSEEEQP) the composition is skewed to basic and acidic residues.

Interacts (via C-terminus) with histone H2A-H2B dimers; the interaction is direct. Interacts with HIRA. Interacts with CK2. Phosphorylated by CK2.

It localises to the nucleus. Functionally, histone chaperone that carries a H2A-H2B histone complex and facilitates its deposition onto chromatin. The chain is HIRA-interacting protein 3 from Mus musculus (Mouse).